A 562-amino-acid chain; its full sequence is Chaperonin GroEL 1 (562 aa).

ATP-binding positions include 30 to 33, lysine 51, 87 to 91, glycine 415, 478 to 480, and aspartate 494; these read TLGP, DGTTT, and NAA.

This sequence belongs to the chaperonin (HSP60) family. As to quaternary structure, forms a cylinder of 14 subunits composed of two heptameric rings stacked back-to-back. Interacts with the co-chaperonin GroES.

It is found in the cytoplasm. It catalyses the reaction ATP + H2O + a folded polypeptide = ADP + phosphate + an unfolded polypeptide.. In terms of biological role, together with its co-chaperonin GroES, plays an essential role in assisting protein folding. The GroEL-GroES system forms a nano-cage that allows encapsulation of the non-native substrate proteins and provides a physical environment optimized to promote and accelerate protein folding. In Sorangium cellulosum (strain So ce56) (Polyangium cellulosum (strain So ce56)), this protein is Chaperonin GroEL 1.